The sequence spans 378 residues: Interleukin-3 receptor subunit alpha (378 aa).

An N-terminal signal peptide occupies residues 1–18 (MVLLWLTLLLIALPCLLQ). At 19-305 (TKEDPNPPIT…EEGANTRAWR (287 aa)) the chain is on the extracellular side. 4 N-linked (GlcNAc...) asparagine glycosylation sites follow: Asn46, Asn64, Asn80, and Asn109. Cystine bridges form between Cys52/Cys68, Cys76/Cys195, Cys112/Cys122, and Cys151/Cys165. Asn212 and Asn218 each carry an N-linked (GlcNAc...) asparagine glycan. Cysteines 217 and 293 form a disulfide. Residues 282 to 286 (LSAWS) carry the WSXWS motif motif. A helical membrane pass occupies residues 306–325 (TSLLIALGTLLALVCVFVIC). Topologically, residues 326–378 (RRYLVMQRLFPRIPHMKDPIGDSFQNDKLVVWEAGKAGLEECLVTEVQVVQKT) are cytoplasmic. Positions 334 to 342 (LFPRIPHMK) match the Box 1 motif motif.

It belongs to the type I cytokine receptor family. Type 5 subfamily. Interacts with IL3. Heterodimer of an alpha and a beta subunit. The beta subunit is common to the IL3, IL5 and GM-CSF receptors. Ubiquitinated by RNFT2 in response to IL3. Ubiquitination leads ligand-induced degradation by the proteasome. Ubiquitinated by RNF128 via 'Lys-27'-linked polyubiquitination, facilitating its degradation through the lysosomal pathway.

Its subcellular location is the cell membrane. Functionally, cell surface receptor for IL3 expressed on hematopoietic progenitor cells, monocytes and B-lymphocytes that controls the production and differentiation of hematopoietic progenitor cells into lineage-restricted cells. Ligand stimulation rapidly induces hetrodimerization with IL3RB, phosphorylation and enzyme activity of effector proteins such as JAK2 and PI3K that play a role in signaling cell proliferation and differentiation. Activation of JAK2 leads to STAT5-mediated transcriptional program. The protein is Interleukin-3 receptor subunit alpha of Homo sapiens (Human).